A 235-amino-acid polypeptide reads, in one-letter code: Probable tetraspanin tspB (235 aa).

The Cytoplasmic portion of the chain corresponds to M1 to N23. A helical membrane pass occupies residues T24–F44. Residues S45–P68 lie on the Extracellular side of the membrane. N-linked (GlcNAc...) asparagine glycosylation occurs at N62. The chain crosses the membrane as a helical span at residues A69–A89. Topologically, residues G90–K93 are cytoplasmic. The chain crosses the membrane as a helical span at residues L94–V114. Residues G115–A200 are Extracellular-facing. Residues N143 and N159 are each glycosylated (N-linked (GlcNAc...) asparagine). A helical membrane pass occupies residues A201–I221. Residues R222 to Q235 lie on the Cytoplasmic side of the membrane.

This sequence belongs to the tetraspanin (TM4SF) family.

It localises to the membrane. This Dictyostelium discoideum (Social amoeba) protein is Probable tetraspanin tspB (tspB).